The sequence spans 157 residues: Stalk-specific protein A (157 aa).

The signal sequence occupies residues 1-19; the sequence is MRSILILLSLLLTIAFASA.

It localises to the secreted. This is Stalk-specific protein A (staA) from Dictyostelium discoideum (Social amoeba).